The chain runs to 378 residues: Probable portal protein (378 aa).

It belongs to the skunalikevirus portal protein family. Homododecamer.

It is found in the virion. Forms the portal vertex of the capsid. This portal plays critical roles in head assembly, genome packaging, neck/tail attachment, and genome ejection. The portal protein multimerizes as a single ring-shaped homododecamer arranged around a central channel. Binds to the terminase subunits to form the packaging machine. Necessary to ensure correct procapsid size during capsid assembly. Once the capsid is packaged with the DNA, the terminase complex is substituted by the connector proteins gp15. The chain is Probable portal protein from Lactococcus phage p2 (Lactococcus lactis bacteriophage p2).